We begin with the raw amino-acid sequence, 104 residues long: Urease subunit beta (104 aa).

The protein belongs to the urease beta subunit family. In terms of assembly, heterotrimer of UreA (gamma), UreB (beta) and UreC (alpha) subunits. Three heterotrimers associate to form the active enzyme.

Its subcellular location is the cytoplasm. It carries out the reaction urea + 2 H2O + H(+) = hydrogencarbonate + 2 NH4(+). Its pathway is nitrogen metabolism; urea degradation; CO(2) and NH(3) from urea (urease route): step 1/1. The polypeptide is Urease subunit beta (Rhodopseudomonas palustris (strain BisB18)).